A 335-amino-acid polypeptide reads, in one-letter code: Fimbrial adhesin PapGIII (335 aa).

Residues 1-21 (MKKWLPAFLFLSLSGCNDALA) form the signal peptide.

The protein belongs to the adhesin PapG family.

It localises to the secreted. Its subcellular location is the fimbrium. Functionally, tip adhesin component of type P pili that binds preferentially to Gal-alpha(1-4)-Gal-containing glycolipids such as globoside. This tip is common in E.coli strains that cause human cystitis, but rare in pyelonephritic isolates. This Escherichia coli protein is Fimbrial adhesin PapGIII.